We begin with the raw amino-acid sequence, 704 residues long: CAP-Gly domain-containing linker protein 4 (704 aa).

ANK repeat units lie at residues 65–101 (TSVS…NVND), 149–180 (TNMN…DVDA), and 186–215 (NFGT…NPAF). One can recognise a CAP-Gly 1 domain in the interval 303–345 (GTTEFASGQWAGIELDEPEGKNNGSVGRVQYFKCAPKYGIFAP). Positions 353–479 (KDGRKTTTHT…SATSAANNSH (127 aa)) are disordered. 3 stretches are compositionally biased toward low complexity: residues 360–371 (THTPSTRATPHA), 423–432 (SMSSSSSSSS), and 440–461 (PKKL…SLPS). Residues 504-546 (GTTNFAPGYWYGIELEKPHGKNDGSVGGVQYFSCSPRYGIFAP) form the CAP-Gly 2 domain. Residues Ser556 and Ser608 each carry the phosphoserine modification. The region spanning 643-685 (GPTDFASGIWLGLELRSAKGKNDGAVGDKRYFTCKPNYGVLVR) is the CAP-Gly 3 domain.

This chain is CAP-Gly domain-containing linker protein 4 (Clip4), found in Mus musculus (Mouse).